Here is a 303-residue protein sequence, read N- to C-terminus: tRNA dimethylallyltransferase (303 aa).

16–23 is a binding site for ATP; the sequence is GPTASGKS. 18–23 serves as a coordination point for substrate; the sequence is TASGKS. Residues 41–44 form an interaction with substrate tRNA region; the sequence is DSMQ. The tract at residues 141–161 is disordered; sequence AEALHGELSARDPETAGRVRP. The segment at 165–169 is interaction with substrate tRNA; that stretch reads QRIVR.

This sequence belongs to the IPP transferase family. In terms of assembly, monomer. It depends on Mg(2+) as a cofactor.

The enzyme catalyses adenosine(37) in tRNA + dimethylallyl diphosphate = N(6)-dimethylallyladenosine(37) in tRNA + diphosphate. In terms of biological role, catalyzes the transfer of a dimethylallyl group onto the adenine at position 37 in tRNAs that read codons beginning with uridine, leading to the formation of N6-(dimethylallyl)adenosine (i(6)A). This chain is tRNA dimethylallyltransferase, found in Rhizobium meliloti (strain 1021) (Ensifer meliloti).